A 116-amino-acid chain; its full sequence is Non-specific lipid-transfer protein AP10 (116 aa).

Residues 1-26 (MKGTSMGVAILAMIVMAQLMVHPSVA) form the signal peptide. 4 disulfides stabilise this stretch: C29-C76, C39-C53, C54-C98, and C74-C112.

The protein belongs to the plant LTP family. In terms of tissue distribution, in germinating seeds, detected in the entire surface of the cotyledons, shoot meristem, inter-cotyledon space, primary xylem and immature vascular elements (at protein level). Expressed in seeds, but not the aerial parts of the plant.

It localises to the secreted. Its subcellular location is the extracellular space. The protein resides in the membrane. Functionally, plant non-specific lipid-transfer proteins transfer phospholipids as well as galactolipids across membranes. May play a role in wax or cutin deposition in the cell walls of expanding epidermal cells and certain secretory tissues. Permeabilizes the membrane of fungal spores, inhibits germination of the spores of the fungus F.solani at a concentration of 40 ug/ml. Inhibits the growth of F.solani with an IC(50) of 6.5 ug/ml, weakly inhibits the growth of the fungus A.alternata. Binds oleoyl-CoA. The chain is Non-specific lipid-transfer protein AP10 from Helianthus annuus (Common sunflower).